A 148-amino-acid chain; its full sequence is 3-dehydroquinate dehydratase (148 aa).

The active-site Proton acceptor is the Tyr-23. Substrate-binding residues include Asn-75, His-81, and Asp-88. The active-site Proton donor is the His-101. Residues Leu-102 to Ser-103 and Arg-112 each bind substrate.

Belongs to the type-II 3-dehydroquinase family. As to quaternary structure, homododecamer.

It carries out the reaction 3-dehydroquinate = 3-dehydroshikimate + H2O. It participates in metabolic intermediate biosynthesis; chorismate biosynthesis; chorismate from D-erythrose 4-phosphate and phosphoenolpyruvate: step 3/7. Functionally, catalyzes a trans-dehydration via an enolate intermediate. In Cellvibrio japonicus (strain Ueda107) (Pseudomonas fluorescens subsp. cellulosa), this protein is 3-dehydroquinate dehydratase.